A 425-amino-acid polypeptide reads, in one-letter code: Serine--tRNA ligase (425 aa).

L-serine is bound at residue 230–232 (TAE). 261–263 (RSE) serves as a coordination point for ATP. E284 provides a ligand contact to L-serine. Residue 348-351 (EISS) participates in ATP binding. S384 is a binding site for L-serine.

The protein belongs to the class-II aminoacyl-tRNA synthetase family. Type-1 seryl-tRNA synthetase subfamily. In terms of assembly, homodimer. The tRNA molecule binds across the dimer.

It localises to the cytoplasm. The catalysed reaction is tRNA(Ser) + L-serine + ATP = L-seryl-tRNA(Ser) + AMP + diphosphate + H(+). The enzyme catalyses tRNA(Sec) + L-serine + ATP = L-seryl-tRNA(Sec) + AMP + diphosphate + H(+). It participates in aminoacyl-tRNA biosynthesis; selenocysteinyl-tRNA(Sec) biosynthesis; L-seryl-tRNA(Sec) from L-serine and tRNA(Sec): step 1/1. In terms of biological role, catalyzes the attachment of serine to tRNA(Ser). Is also able to aminoacylate tRNA(Sec) with serine, to form the misacylated tRNA L-seryl-tRNA(Sec), which will be further converted into selenocysteinyl-tRNA(Sec). In Streptococcus pyogenes serotype M1, this protein is Serine--tRNA ligase.